The chain runs to 395 residues: Na(+)/H(+) antiporter NhaA (395 aa).

A run of 11 helical transmembrane segments spans residues 11–31 (FQLE…ALII), 61–81 (LLLW…GLEV), 96–116 (IVLP…IYWF), 127–147 (GWAI…ALLG), 156–176 (LFLM…IAIF), 179–199 (GELS…LVAM), 215–237 (LILW…TLAF), 262–282 (VAYG…LSGV), 295–315 (IAVG…WLAV), 334–354 (VAIL…LAFV), and 366–386 (MGIL…TAAA).

This sequence belongs to the NhaA Na(+)/H(+) (TC 2.A.33) antiporter family.

Its subcellular location is the cell inner membrane. The enzyme catalyses Na(+)(in) + 2 H(+)(out) = Na(+)(out) + 2 H(+)(in). In terms of biological role, na(+)/H(+) antiporter that extrudes sodium in exchange for external protons. This is Na(+)/H(+) antiporter NhaA from Pseudomonas fluorescens (strain Pf0-1).